The primary structure comprises 130 residues: S-adenosylmethionine decarboxylase proenzyme (130 aa).

Ser64 acts as the Schiff-base intermediate with substrate; via pyruvic acid in catalysis. The residue at position 64 (Ser64) is a Pyruvic acid (Ser); by autocatalysis. His69 acts as the Proton acceptor; for processing activity in catalysis. The active-site Proton donor; for catalytic activity is Cys84.

The protein belongs to the prokaryotic AdoMetDC family. Type 1 subfamily. As to quaternary structure, heterotetramer of two alpha and two beta chains arranged as a dimer of alpha/beta heterodimers. The cofactor is pyruvate. Post-translationally, is synthesized initially as an inactive proenzyme. Formation of the active enzyme involves a self-maturation process in which the active site pyruvoyl group is generated from an internal serine residue via an autocatalytic post-translational modification. Two non-identical subunits are generated from the proenzyme in this reaction, and the pyruvate is formed at the N-terminus of the alpha chain, which is derived from the carboxyl end of the proenzyme. The post-translation cleavage follows an unusual pathway, termed non-hydrolytic serinolysis, in which the side chain hydroxyl group of the serine supplies its oxygen atom to form the C-terminus of the beta chain, while the remainder of the serine residue undergoes an oxidative deamination to produce ammonia and the pyruvoyl group blocking the N-terminus of the alpha chain.

It carries out the reaction S-adenosyl-L-methionine + H(+) = S-adenosyl 3-(methylsulfanyl)propylamine + CO2. It functions in the pathway amine and polyamine biosynthesis; S-adenosylmethioninamine biosynthesis; S-adenosylmethioninamine from S-adenosyl-L-methionine: step 1/1. In terms of biological role, catalyzes the decarboxylation of S-adenosylmethionine to S-adenosylmethioninamine (dcAdoMet), the propylamine donor required for the synthesis of the polyamines spermine and spermidine from the diamine putrescine. In Picrophilus torridus (strain ATCC 700027 / DSM 9790 / JCM 10055 / NBRC 100828 / KAW 2/3), this protein is S-adenosylmethionine decarboxylase proenzyme.